Here is a 559-residue protein sequence, read N- to C-terminus: Potassium-transporting ATPase potassium-binding subunit (559 aa).

The next 12 helical transmembrane spans lie at 5 to 25 (GFLL…PLGM), 63 to 83 (LLAI…LLML), 131 to 151 (VGLT…VFAL), 173 to 193 (ITLW…IQQG), 254 to 274 (VQML…GEVV), 282 to 302 (AILW…MWAE), 327 to 347 (FGIL…CGAV), 356 to 376 (ALGG…FGGV), 379 to 399 (GLYG…LMVG), 416 to 436 (MIAL…ALAM), 483 to 503 (LLLA…VMAI), and 525 to 545 (ALFI…TFIP).

Belongs to the KdpA family. As to quaternary structure, the system is composed of three essential subunits: KdpA, KdpB and KdpC.

Its subcellular location is the cell inner membrane. Its function is as follows. Part of the high-affinity ATP-driven potassium transport (or Kdp) system, which catalyzes the hydrolysis of ATP coupled with the electrogenic transport of potassium into the cytoplasm. This subunit binds the periplasmic potassium ions and delivers the ions to the membrane domain of KdpB through an intramembrane tunnel. The chain is Potassium-transporting ATPase potassium-binding subunit from Klebsiella pneumoniae subsp. pneumoniae (strain ATCC 700721 / MGH 78578).